The chain runs to 615 residues: DNA mismatch repair protein MutL (615 aa).

Residues 363 to 397 (FAEPAAREPVAPRYSPAPASGSRPAAPWPNAQPGY) form a disordered region. A compositionally biased stretch (low complexity) spans 364-387 (AEPAAREPVAPRYSPAPASGSRPA).

Belongs to the DNA mismatch repair MutL/HexB family.

In terms of biological role, this protein is involved in the repair of mismatches in DNA. It is required for dam-dependent methyl-directed DNA mismatch repair. May act as a 'molecular matchmaker', a protein that promotes the formation of a stable complex between two or more DNA-binding proteins in an ATP-dependent manner without itself being part of a final effector complex. The chain is DNA mismatch repair protein MutL from Shigella flexneri.